We begin with the raw amino-acid sequence, 221 residues long: 2-amino-5-formylamino-6-ribosylaminopyrimidin-4(3H)-one 5'-monophosphate deformylase (221 aa).

Fe cation is bound by residues glutamate 29, histidine 31, aspartate 40, and histidine 108.

It belongs to the creatininase superfamily. FAPy deformylase family. In terms of assembly, homodimer. Requires Fe(2+) as cofactor. Zn(2+) is required as a cofactor.

It catalyses the reaction 2-amino-5-formylamino-6-(5-phospho-D-ribosylamino)pyrimidin-4(3H)-one + H2O = 2,5-diamino-6-(1-D-ribosylamino)pyrimidin-4(3H)-one 5'-phosphate + formate + H(+). Its pathway is cofactor biosynthesis; coenzyme F420 biosynthesis. It functions in the pathway cofactor biosynthesis; riboflavin biosynthesis. Functionally, catalyzes the hydrolysis of the formamide of 2-amino-5-formylamino-6-ribosylamino-4(3H)-pyrimidinone 5'-monophosphate (FAPy) to form 2,5-diamino-6-ribosylamino-4(3H)-pyrimidinone 5'-phosphate (APy). The polypeptide is 2-amino-5-formylamino-6-ribosylaminopyrimidin-4(3H)-one 5'-monophosphate deformylase (Methanococcus maripaludis (strain C7 / ATCC BAA-1331)).